The sequence spans 176 residues: Neuropeptide-like protein 1 (176 aa).

The N-terminal stretch at 1–19 is a signal peptide; it reads MKATFVLACLLVIAAVSHA. The tract at residues 59-79 is disordered; sequence GKRSAEQNEQANKEDKATSDK. Over residues 61 to 79 the composition is skewed to basic and acidic residues; that stretch reads RSAEQNEQANKEDKATSDK.

In AWC olfactory sensory neurons, required for the detection of preferred food sources. In Caenorhabditis elegans, this protein is Neuropeptide-like protein 1 (nlp-1).